The sequence spans 1143 residues: cGMP-specific 3',5'-cyclic phosphodiesterase (1143 aa).

2 stretches are compositionally biased toward low complexity: residues 1 to 19 (MHGPVSRSSSSSNMTDVSS) and 31 to 45 (TTSSSSAATTSASSS). The interval 1 to 167 (MHGPVSRSSS…KASTTASQQD (167 aa)) is disordered. Over residues 46–59 (KPLTNGANKTTIST) the composition is skewed to polar residues. Over residues 75–84 (GAIPASSSSG) the composition is skewed to low complexity. The segment covering 96-107 (SNNNRPAATNRS) has biased composition (polar residues). Residues 131-153 (SSSSPSQSPSQTQASIQTQTSQQ) are compositionally biased toward low complexity. GAF domains lie at 272–424 (DIDV…GIGI) and 456–637 (NLEC…GLGI). Residues 667-990 (SQDQTEKLTQ…RNWQDLAEKV (324 aa)) enclose the PDEase domain. H743 functions as the Proton donor in the catalytic mechanism. The a divalent metal cation site is built by H747, H783, D784, and D894. Disordered regions lie at residues 1031-1060 (QQSQHGSEDSHTPEHQRSGSRLSMKKTGAL) and 1090-1143 (SHVS…CALL). 2 stretches are compositionally biased toward basic and acidic residues: residues 1036–1047 (GSEDSHTPEHQR) and 1090–1100 (SHVSEDMDDKS). Over residues 1109–1127 (ASGSMGRMSASSSTSSTGG) the composition is skewed to low complexity. A compositionally biased stretch (basic residues) spans 1133-1143 (SKKRSKLCALL). Cysteine methyl ester is present on C1140. C1140 is lipidated: S-farnesyl cysteine. Residues 1141–1143 (ALL) constitute a propeptide, removed in mature form.

This sequence belongs to the cyclic nucleotide phosphodiesterase family. Interacts with PrBP. It depends on a divalent metal cation as a cofactor.

The protein resides in the cell membrane. It catalyses the reaction 3',5'-cyclic GMP + H2O = GMP + H(+). Functionally, has a role regulating cGMP transport in Malpighian tubule principal cells. In Drosophila simulans (Fruit fly), this protein is cGMP-specific 3',5'-cyclic phosphodiesterase.